A 224-amino-acid polypeptide reads, in one-letter code: MGFVCLFGLVVMGAWGAWGGSQATEYVLRSVIAKEVGDILRVPCMRTPADDVSWRYEAPSVIDYARIDGIFLRYHCPGLDTFLWDRHAQRAYLVNPFLFAAGFLEDLSHSVFPADTQETTTRRALYKEIRDALGSRKQAVSHAPVRAGCVNFDYSRTRRCVGRRDLRPANTTSTWEPPVSSDDEASSQSKPLATQPPVLALSNAPPRRVSPTRGRRRHTRLRRN.

A signal peptide spans 1-16 (MGFVCLFGLVVMGAWG). The interaction with gH stretch occupies residues 20-161 (GSQATEYVLR…FDYSRTRRCV (142 aa)). Residues 23-201 (ATEYVLRSVI…LATQPPVLAL (179 aa)) form the gL alphaherpesvirus-type domain. 2 disulfides stabilise this stretch: C44–C76 and C149–C160. The segment at 168 to 224 (PANTTSTWEPPVSSDDEASSQSKPLATQPPVLALSNAPPRRVSPTRGRRRHTRLRRN) is disordered. The span at 213–224 (RGRRRHTRLRRN) shows a compositional bias: basic residues.

This sequence belongs to the herpesviridae glycoprotein L (gL) family. Alphaherpesvirinae gL subfamily. As to quaternary structure, interacts with glycoprotein H (gH); this interaction is necessary for the correct processing and cell surface expression of gH. The heterodimer gH/gL seems to interact with gB trimers during fusion.

The protein localises to the virion membrane. The protein resides in the host cell membrane. It is found in the host Golgi apparatus. Its subcellular location is the host trans-Golgi network. Its function is as follows. The heterodimer glycoprotein H-glycoprotein L is required for the fusion of viral and plasma membranes leading to virus entry into the host cell. Acts as a functional inhibitor of gH and maintains gH in an inhibited form. Upon binding to host integrins, gL dissociates from gH leading to activation of the viral fusion glycoproteins gB and gH. The sequence is that of Envelope glycoprotein L from Homo sapiens (Human).